Reading from the N-terminus, the 463-residue chain is Metalloprotease slr0863 (463 aa).

The protein belongs to the peptidase U62 family.

Its function is as follows. Probable metalloprotease. The chain is Metalloprotease slr0863 from Synechocystis sp. (strain ATCC 27184 / PCC 6803 / Kazusa).